The following is a 116-amino-acid chain: UPF0342 protein lhv_1666 (116 aa).

The protein belongs to the UPF0342 family.

In Lactobacillus helveticus (strain DPC 4571), this protein is UPF0342 protein lhv_1666.